Here is a 413-residue protein sequence, read N- to C-terminus: Falstatin (413 aa).

The N-terminal stretch at methionine 1 to cysteine 21 is a signal peptide. The short motif at leucine 284 to tryptophan 294 is the BC loop; binds and inhibits the active site cavity of cysteine proteases element. Polar residues-rich tracts occupy residues isoleucine 325–threonine 339 and asparagine 346–histidine 360. The disordered stretch occupies residues isoleucine 325–glutamine 367.

This sequence belongs to the protease inhibitor I71 family. Oligomer; probably composed of 10 monomers. Proteolytically cleaved.

Its subcellular location is the secreted. It is found in the cytoplasmic vesicle. The protein resides in the secretory vesicle. It localises to the microneme. The protein localises to the parasitophorous vacuole lumen. Its subcellular location is the host cytoplasm. In terms of biological role, cysteine protease inhibitor. Inhibits cysteine protease falcipains FP2 and FP3. Required for the invasion of host erythrocytes by merozoites. In the mosquito vector, essential for the gliding motility of hemocoel sporozoites and, therefore, for salivary gland invasion and the subsequent transmission from the mosquito to the mammalian host. Required for the invasion of host hepatocytes. During the liver stage, may prevent host hepatocyte cell death likely by inhibiting host cysteine proteases. The chain is Falstatin from Plasmodium falciparum (isolate 3D7).